The sequence spans 214 residues: Thymidylate kinase (214 aa).

11-18 (GPEGAGKT) provides a ligand contact to ATP.

The protein belongs to the thymidylate kinase family.

The catalysed reaction is dTMP + ATP = dTDP + ADP. In terms of biological role, phosphorylation of dTMP to form dTDP in both de novo and salvage pathways of dTTP synthesis. The polypeptide is Thymidylate kinase (Leuconostoc citreum (strain KM20)).